The primary structure comprises 269 residues: Pertussis toxin subunit 1 homolog (269 aa).

Positions 1 to 34 (MRCTRAIRQTARTGWLTWLAILAVTAPVTSPAWA) are cleaved as a signal peptide.

It belongs to the bacterial exotoxin subunit A family.

The chain is Pertussis toxin subunit 1 homolog (ptxA) from Bordetella bronchiseptica (strain ATCC BAA-588 / NCTC 13252 / RB50) (Alcaligenes bronchisepticus).